The following is a 315-amino-acid chain: tRNA wybutosine-synthesizing protein 5 (315 aa).

The JmjC domain maps to 102-267; sequence DEKYYLRSLG…YDKTDTYGNK (166 aa). A 2-oxoglutarate-binding site is contributed by Y106. The Fe cation site is built by H160 and D162. The 2-oxoglutarate site is built by N166 and K175. H235 serves as a coordination point for Fe cation.

Belongs to the TYW5 family. Homodimer. It depends on Fe(2+) as a cofactor.

It carries out the reaction 7-[(3S)-3-amino-3-carboxypropyl]wyosine(37) in tRNA(Phe) + 2-oxoglutarate + O2 = 7-(2-hydroxy-3-amino-3-carboxypropyl)wyosine(37) in tRNA(Phe) + succinate + CO2. It functions in the pathway tRNA modification; wybutosine-tRNA(Phe) biosynthesis. In terms of biological role, tRNA hydroxylase that acts as a component of the wybutosine biosynthesis pathway. Wybutosine is a hyper modified guanosine with a tricyclic base found at the 3'-position adjacent to the anticodon of eukaryotic phenylalanine tRNA. Catalyzes the hydroxylation of 7-(a-amino-a-carboxypropyl)wyosine (yW-72) into undermodified hydroxywybutosine (OHyW*). OHyW* being further transformed into hydroxywybutosine (OHyW) by LCMT2/TYW4. OHyW is a derivative of wybutosine found in higher eukaryotes. The polypeptide is tRNA wybutosine-synthesizing protein 5 (TYW5) (Homo sapiens (Human)).